We begin with the raw amino-acid sequence, 302 residues long: MQDRIVRATAANGGIRLVAVLTTESSLEAKKRHDLSYLTTCILGRAFSASLLLASSMKIMHGRVTLRVRSDGPLKGLLVDAGRDGKVRGYVGNPDLELDLVKIDSNKYSFDFTKALGTGYLNVIRDSGIGEPFTSTVELVNGNIAEDLASYLYHSEQTPSAVFIGEKIQNQGIICSGGLLAQVLPKKDTDPLLVSLLEERCKEVNSFSEDLFQSKDNLLSLIKKIFPDIDDESISEKARSQEVSFKCKCSKQRSLNAMNMLDKSELEDILKKDGNAELVCEFCKNKYLINYEEIKLMIENQS.

Disulfide bonds link Cys247-Cys249 and Cys280-Cys283.

The protein belongs to the HSP33 family. In terms of processing, under oxidizing conditions two disulfide bonds are formed involving the reactive cysteines. Under reducing conditions zinc is bound to the reactive cysteines and the protein is inactive.

The protein localises to the cytoplasm. In terms of biological role, redox regulated molecular chaperone. Protects both thermally unfolding and oxidatively damaged proteins from irreversible aggregation. Plays an important role in the bacterial defense system toward oxidative stress. The polypeptide is 33 kDa chaperonin (Prochlorococcus marinus (strain MIT 9301)).